The chain runs to 304 residues: Quinolinate synthase (304 aa).

Residues H24 and S41 each contribute to the iminosuccinate site. Residue C86 coordinates [4Fe-4S] cluster. Residues 112 to 114 (YVN) and S129 each bind iminosuccinate. C171 contacts [4Fe-4S] cluster. Iminosuccinate is bound by residues 197 to 199 (HPE) and T214. A [4Fe-4S] cluster-binding site is contributed by C259.

The protein belongs to the quinolinate synthase family. Type 2 subfamily. Requires [4Fe-4S] cluster as cofactor.

It is found in the cytoplasm. It catalyses the reaction iminosuccinate + dihydroxyacetone phosphate = quinolinate + phosphate + 2 H2O + H(+). Its pathway is cofactor biosynthesis; NAD(+) biosynthesis; quinolinate from iminoaspartate: step 1/1. Its function is as follows. Catalyzes the condensation of iminoaspartate with dihydroxyacetone phosphate to form quinolinate. In Geotalea uraniireducens (strain Rf4) (Geobacter uraniireducens), this protein is Quinolinate synthase.